A 575-amino-acid chain; its full sequence is Adenine deaminase (575 aa).

This sequence belongs to the metallo-dependent hydrolases superfamily. Adenine deaminase family. The cofactor is Mn(2+).

It catalyses the reaction adenine + H2O + H(+) = hypoxanthine + NH4(+). This Nitratidesulfovibrio vulgaris (strain ATCC 29579 / DSM 644 / CCUG 34227 / NCIMB 8303 / VKM B-1760 / Hildenborough) (Desulfovibrio vulgaris) protein is Adenine deaminase.